The chain runs to 563 residues: Arginine--tRNA ligase (563 aa).

Residues Ala119–Arg129 carry the 'HIGH' region motif.

The protein belongs to the class-I aminoacyl-tRNA synthetase family.

It localises to the cytoplasm. The enzyme catalyses tRNA(Arg) + L-arginine + ATP = L-arginyl-tRNA(Arg) + AMP + diphosphate. The sequence is that of Arginine--tRNA ligase from Methanocella arvoryzae (strain DSM 22066 / NBRC 105507 / MRE50).